An 879-amino-acid polypeptide reads, in one-letter code: Oxysterol-binding protein-related protein 5 (879 aa).

The segment at 1–73 (MKEEAFLRRR…TPSSATKVPP (73 aa)) is disordered. The residue at position 12 (S12) is a Phosphoserine. Positions 93-123 (VTKKETLKAQKENYRQEKKRATRQLLSALTD) form a coiled coil. Positions 126–243 (VVIMADSLKI…WLDALELALR (118 aa)) constitute a PH domain. Residues 254 to 341 (KPGRDGEPGT…TPGAPVRRGT (88 aa)) are disordered. 2 stretches are compositionally biased toward basic and acidic residues: residues 300-309 (FSDKSERENP) and 316-325 (TQDHSRKTES). Residues 384-389 (LSRVVL), 446-449 (KPYN), and 478-479 (HH) contribute to the a 1,2-diacyl-sn-glycero-3-phospho-(1D-myo-inositol 4-phosphate) site. A 1,2-diacyl-sn-glycero-3-phospho-L-serine is bound by residues 384–389 (LSRVVL) and N449. Residue S504 coordinates a 1,2-diacyl-sn-glycero-3-phospho-L-serine. Residues K670, E674, and R678 each coordinate a 1,2-diacyl-sn-glycero-3-phospho-(1D-myo-inositol 4-phosphate). Residues 742–806 (TTFLGSPGPR…FVPGGESPCP (65 aa)) are disordered. A Phosphoserine modification is found at S747. The span at 750 to 765 (PRHERSGPDQRLRKAS) shows a compositional bias: basic and acidic residues. A compositionally biased stretch (polar residues) spans 766-783 (DQPSGHSQATESSGSTPE). A helical transmembrane segment spans residues 860-878 (SWFLLCVFLACQLFINHIL).

It belongs to the OSBP family. In terms of tissue distribution, ubiquitously expressed.

The protein resides in the endoplasmic reticulum membrane. Functionally, lipid transporter involved in lipid countertransport between the endoplasmic reticulum and the plasma membrane: specifically exchanges phosphatidylserine with phosphatidylinositol 4-phosphate (PI4P), delivering phosphatidylserine to the plasma membrane in exchange for PI4P, which is degraded by the SAC1/SACM1L phosphatase in the endoplasmic reticulum. Binds phosphatidylserine and PI4P in a mutually exclusive manner. May cooperate with NPC1 to mediate the exit of cholesterol from endosomes/lysosomes. Binds 25-hydroxycholesterol and cholesterol. This Homo sapiens (Human) protein is Oxysterol-binding protein-related protein 5 (OSBPL5).